A 738-amino-acid chain; its full sequence is MDLGDVVEMPMKVTEWQKTYTYDSGINSGINTSVPSLNGKMVIEDDSLAYPNSYTTVKTTTYTQQQNPDMESHLNMTRAQRVRAAMYPETVEDHSYLFSTQIEGQQTNVQKLAEPSQMLKSAIMHLINYQDDAELATRAIPELTKLLNDEDPMVVNKASMIVNQLSKKEASRKALMQSPQIVAAIVRTMQHTSDMDTARCTTSILHNLSHHREGLLSIFKSGGIPALVRMLSSPVESVLFYAITTLHNLLLYQEGAKMAVRLADGLQKMVPLLNKNNPKFLAITTDCLQLLAYGNQESKLIILGNGGPQGLVQIMRNYNYEKLLWTTSRVLKVLSVCPSNKPAIVEAGGMQALGKHLTSNSPRLVQNCLWTLRNLSDVATKQEGLDNVLKILVNQLSSDDVNVLTCATGTLSNLTCNNGRNKTLVTQSNGVESLIHTILRASDKDDIAEPAVCAMRHLTSRHQDAEVAQNSVRLHYGIPAIVKLLNPPYQWPLVKATIGLIRNLALCPANHAPLYDAGVIPRLVQLLVKSHQDAQRHAASGTQQPYTDGVKMEEIVEGCTGALHILARDPVNRMDIYKLNTIPLFVQLLYSPVENIQRVSSGVLCELAQDKEAADTIDAEGASAPLMELLHSRNEGIATYAAAVLFRISEDKNADYRKRVSVELTNAIFRQDPAAWEAAQSMIPLNDPYSDEMENYRAMYPEDIPLEPMGGDMDVEYAMDGYSDHPGRGHYADNHMMA.

ARM repeat units lie at residues 128–167 (NYQD…QLSK), 168–211 (KEAS…LSHH), 212–251 (REGL…NLLL), 254–293 (EGAK…LLAY), 294–337 (GNQE…LSVC), 338–377 (PSNK…NLSD), 379–416 (ATKQ…NLTC), 419–460 (GRNK…HLTS), 466–506 (EVAQ…NLAL), 508–547 (PANH…QPYT), 570–609 (PVNR…ELAQ), and 611–657 (KEAA…ADYR).

It belongs to the beta-catenin family. In terms of assembly, homodimer.

The protein resides in the cell junction. Its subcellular location is the adherens junction. The protein localises to the desmosome. It localises to the cytoplasm. It is found in the cytoskeleton. The protein resides in the membrane. Common junctional plaque protein. The membrane-associated plaques are architectural elements in an important strategic position to influence the arrangement and function of both the cytoskeleton and the cells within the tissue. The presence of plakoglobin in both the desmosomes and in the intermediate junctions suggests that it plays a central role in the structure and function of submembranous plaques. This is Junction plakoglobin (jup) from Xenopus laevis (African clawed frog).